A 233-amino-acid chain; its full sequence is 7-cyano-7-deazaguanine synthase (233 aa).

ATP is bound at residue 8–18; the sequence is FSGGQDSTTCL. 4 residues coordinate Zn(2+): cysteine 188, cysteine 197, cysteine 200, and cysteine 203.

The protein belongs to the QueC family. Zn(2+) is required as a cofactor.

It catalyses the reaction 7-carboxy-7-deazaguanine + NH4(+) + ATP = 7-cyano-7-deazaguanine + ADP + phosphate + H2O + H(+). It functions in the pathway purine metabolism; 7-cyano-7-deazaguanine biosynthesis. Its function is as follows. Catalyzes the ATP-dependent conversion of 7-carboxy-7-deazaguanine (CDG) to 7-cyano-7-deazaguanine (preQ(0)). This is 7-cyano-7-deazaguanine synthase from Klebsiella pneumoniae (strain 342).